A 318-amino-acid polypeptide reads, in one-letter code: Tyrosine recombinase XerC (318 aa).

A Core-binding (CB) domain is found at 17 to 108 (PEVMAERRRW…GLRSFLRYLE (92 aa)). In terms of domain architecture, Tyr recombinase spans 129 to 312 (SLPKALTDRE…DSARLLEIYD (184 aa)). Residues arginine 172, lysine 196, histidine 264, arginine 267, and histidine 290 contribute to the active site. Catalysis depends on tyrosine 299, which acts as the O-(3'-phospho-DNA)-tyrosine intermediate.

This sequence belongs to the 'phage' integrase family. XerC subfamily. In terms of assembly, forms a cyclic heterotetrameric complex composed of two molecules of XerC and two molecules of XerD.

The protein resides in the cytoplasm. Site-specific tyrosine recombinase, which acts by catalyzing the cutting and rejoining of the recombining DNA molecules. The XerC-XerD complex is essential to convert dimers of the bacterial chromosome into monomers to permit their segregation at cell division. It also contributes to the segregational stability of plasmids. The polypeptide is Tyrosine recombinase XerC (Rhizobium meliloti (strain 1021) (Ensifer meliloti)).